The sequence spans 660 residues: T-box protein H15 (660 aa).

Positions 1–11 (MLLSNQPANTK) are enriched in polar residues. Disordered regions lie at residues 1–72 (MLLS…NHNQ), 90–122 (GGNAPSSREPSERSLSPASVERYSGQDADDDVD), and 169–266 (QQQQ…PKIV). Over residues 12-22 (PQQTPSPSQTQ) the composition is skewed to low complexity. Polar residues predominate over residues 23–33 (NFKSKLQQQIV). A compositionally biased stretch (low complexity) spans 35 to 47 (AAAAAAANIANGS). The span at 48 to 71 (SHHHHHQNHHHHHPLNNHHNHNHN) shows a compositional bias: basic residues. Low complexity-rich tracts occupy residues 93–108 (APSSREPSERSLSPAS) and 169–179 (QQQQQQQQQRQ). Basic residues predominate over residues 180–198 (QTHHHATTGKQQRQHHNHH). A compositionally biased stretch (low complexity) spans 199–233 (SSNTNNSSNSGNSNTNSKSSSQRGRSAAAVGAAAT). Positions 234 to 243 (PSPPPPPPSQ) are enriched in pro residues. A DNA-binding region (T-box) is located at residues 286–472 (LWDKFHELGT…SNPFAKGFRD (187 aa)). The disordered stretch occupies residues 598 to 660 (NRTPPPSMAV…PPASNRAESP (63 aa)). A compositionally biased stretch (pro residues) spans 600–613 (TPPPSMAVAPPAPA). Residues 614-624 (TPTSSCGSASP) show a composition bias toward low complexity. Over residues 643–660 (QVPQHQASPPASNRAESP) the composition is skewed to polar residues.

The protein resides in the nucleus. This chain is T-box protein H15 (H15), found in Drosophila melanogaster (Fruit fly).